We begin with the raw amino-acid sequence, 216 residues long: UPF0548 protein (216 aa).

Belongs to the UPF0548 family.

In Dictyostelium discoideum (Social amoeba), this protein is UPF0548 protein.